A 508-amino-acid chain; its full sequence is Photosystem II CP47 reaction center protein (508 aa).

The next 6 membrane-spanning stretches (helical) occupy residues 21–36 (SVHI…WAGS), 101–115 (IVFS…IWHW), 140–156 (GIHL…FGAF), 203–218 (IAAG…FHLS), 237–252 (VLSS…AFVV), and 457–472 (SFAL…HGAR).

The protein belongs to the PsbB/PsbC family. PsbB subfamily. PSII is composed of 1 copy each of membrane proteins PsbA, PsbB, PsbC, PsbD, PsbE, PsbF, PsbH, PsbI, PsbJ, PsbK, PsbL, PsbM, PsbT, PsbX, PsbY, PsbZ, Psb30/Ycf12, at least 3 peripheral proteins of the oxygen-evolving complex and a large number of cofactors. It forms dimeric complexes. Binds multiple chlorophylls. PSII binds additional chlorophylls, carotenoids and specific lipids. is required as a cofactor.

The protein resides in the plastid. It is found in the chloroplast thylakoid membrane. Its function is as follows. One of the components of the core complex of photosystem II (PSII). It binds chlorophyll and helps catalyze the primary light-induced photochemical processes of PSII. PSII is a light-driven water:plastoquinone oxidoreductase, using light energy to abstract electrons from H(2)O, generating O(2) and a proton gradient subsequently used for ATP formation. The polypeptide is Photosystem II CP47 reaction center protein (Nuphar advena (Common spatterdock)).